Reading from the N-terminus, the 325-residue chain is Bifunctional ligase/repressor BirA (325 aa).

Positions 23-42 form a DNA-binding region, H-T-H motif; it reads GQKISDALGCSRTAVWKHIE. The 189-residue stretch at 74 to 262 folds into the BPL/LPL catalytic domain; the sequence is RFGLKTEVMG…CFEKRYRDYM (189 aa). Residues glutamine 118, 122-124, and lysine 189 contribute to the biotin site; that span reads RGR.

The protein belongs to the biotin--protein ligase family.

It carries out the reaction biotin + L-lysyl-[protein] + ATP = N(6)-biotinyl-L-lysyl-[protein] + AMP + diphosphate + H(+). Acts both as a biotin--[acetyl-CoA-carboxylase] ligase and a repressor. This chain is Bifunctional ligase/repressor BirA, found in Bacillus subtilis (strain 168).